Reading from the N-terminus, the 216-residue chain is 3-keto-L-gulonate-6-phosphate decarboxylase UlaD (216 aa).

Substrate is bound at residue D11. E33 and D62 together coordinate Mg(2+). R192 is a substrate binding site.

It belongs to the HPS/KGPDC family. KGPDC subfamily. As to quaternary structure, homodimer. Mg(2+) serves as cofactor.

It catalyses the reaction 3-dehydro-L-gulonate 6-phosphate + H(+) = L-xylulose 5-phosphate + CO2. It participates in cofactor degradation; L-ascorbate degradation; D-xylulose 5-phosphate from L-ascorbate: step 2/4. Catalyzes the decarboxylation of 3-keto-L-gulonate-6-P into L-xylulose-5-P. Is involved in the anaerobic L-ascorbate utilization. The polypeptide is 3-keto-L-gulonate-6-phosphate decarboxylase UlaD (Shigella dysenteriae serotype 1 (strain Sd197)).